A 245-amino-acid chain; its full sequence is Precorrin-2 C(20)-methyltransferase (245 aa).

The protein belongs to the precorrin methyltransferase family. As to quaternary structure, homodimer.

The catalysed reaction is precorrin-2 + S-adenosyl-L-methionine = precorrin-3A + S-adenosyl-L-homocysteine + H(+). The protein operates within cofactor biosynthesis; adenosylcobalamin biosynthesis; cob(II)yrinate a,c-diamide from precorrin-2 (aerobic route): step 1/10. Functionally, methylates precorrin-2 at the C-20 position to produce precorrin-3A. The polypeptide is Precorrin-2 C(20)-methyltransferase (cobI) (Sinorhizobium sp).